Here is a 219-residue protein sequence, read N- to C-terminus: 7-cyano-7-deazaguanine synthase (219 aa).

10 to 20 (FSGGQDSTTCL) contacts ATP. Zn(2+)-binding residues include Cys188, Cys197, Cys200, and Cys203.

Belongs to the QueC family. As to quaternary structure, homodimer. It depends on Zn(2+) as a cofactor.

It carries out the reaction 7-carboxy-7-deazaguanine + NH4(+) + ATP = 7-cyano-7-deazaguanine + ADP + phosphate + H2O + H(+). It participates in purine metabolism; 7-cyano-7-deazaguanine biosynthesis. Functionally, catalyzes the ATP-dependent conversion of 7-carboxy-7-deazaguanine (CDG) to 7-cyano-7-deazaguanine (preQ(0)). The polypeptide is 7-cyano-7-deazaguanine synthase (Clostridium botulinum (strain Kyoto / Type A2)).